The sequence spans 214 residues: MDQSIADLRKNYTLTGLTEAEANPNPFVQFRLWFNQALEAQFLEPNAMTIATVTPDGKPSARMVLLKDFDERGFVFYTNYDSAKGQQLAQTPWAALVFWWDALERQVRIEGTVEKVSQEESDAYFASRPWESRLGAWVSDQSRVIESREVLENRLQALKDKYQAQDVPRPPHWGGFRVMPEKIEFWQGRPNRLHDRLCYKWIEGEKWIIERLSP.

Residues 9 to 12 and K67 contribute to the substrate site; that span reads RKNY. FMN is bound by residues 62–67, 77–78, K84, and Q106; these read RMVLLK and YT. Substrate-binding residues include Y124, R128, and S132. FMN is bound by residues 141-142 and W186; that span reads QS. 192 to 194 is a binding site for substrate; sequence RLH. R196 is an FMN binding site.

Belongs to the pyridoxamine 5'-phosphate oxidase family. Homodimer. FMN is required as a cofactor.

It catalyses the reaction pyridoxamine 5'-phosphate + O2 + H2O = pyridoxal 5'-phosphate + H2O2 + NH4(+). It carries out the reaction pyridoxine 5'-phosphate + O2 = pyridoxal 5'-phosphate + H2O2. It functions in the pathway cofactor metabolism; pyridoxal 5'-phosphate salvage; pyridoxal 5'-phosphate from pyridoxamine 5'-phosphate: step 1/1. Its pathway is cofactor metabolism; pyridoxal 5'-phosphate salvage; pyridoxal 5'-phosphate from pyridoxine 5'-phosphate: step 1/1. Its function is as follows. Catalyzes the oxidation of either pyridoxine 5'-phosphate (PNP) or pyridoxamine 5'-phosphate (PMP) into pyridoxal 5'-phosphate (PLP). This is Pyridoxine/pyridoxamine 5'-phosphate oxidase from Gloeothece citriformis (strain PCC 7424) (Cyanothece sp. (strain PCC 7424)).